The following is a 350-amino-acid chain: Hydroxymethylglutaryl-CoA synthase (350 aa).

D30 serves as a coordination point for (3S)-3-hydroxy-3-methylglutaryl-CoA. E82 acts as the Proton donor/acceptor in catalysis. 4 residues coordinate (3S)-3-hydroxy-3-methylglutaryl-CoA: C114, S155, T203, and H236. C114 serves as the catalytic Acyl-thioester intermediate. H236 functions as the Proton donor/acceptor in the catalytic mechanism. Residue R241 coordinates CoA. Residues R245, N268, and S298 each coordinate (3S)-3-hydroxy-3-methylglutaryl-CoA.

This sequence belongs to the thiolase-like superfamily. Archaeal HMG-CoA synthase family. In terms of assembly, interacts with acetoacetyl-CoA thiolase that catalyzes the precedent step in the pathway and with a DUF35 protein. The acetoacetyl-CoA thiolase/HMG-CoA synthase complex channels the intermediate via a fused CoA-binding site, which allows for efficient coupling of the endergonic thiolase reaction with the exergonic HMGCS reaction.

It carries out the reaction acetoacetyl-CoA + acetyl-CoA + H2O = (3S)-3-hydroxy-3-methylglutaryl-CoA + CoA + H(+). The protein operates within metabolic intermediate biosynthesis; (R)-mevalonate biosynthesis; (R)-mevalonate from acetyl-CoA: step 2/3. Functionally, catalyzes the condensation of acetyl-CoA with acetoacetyl-CoA to form 3-hydroxy-3-methylglutaryl-CoA (HMG-CoA). Functions in the mevalonate (MVA) pathway leading to isopentenyl diphosphate (IPP), a key precursor for the biosynthesis of isoprenoid compounds that are building blocks of archaeal membrane lipids. The protein is Hydroxymethylglutaryl-CoA synthase of Pyrobaculum aerophilum (strain ATCC 51768 / DSM 7523 / JCM 9630 / CIP 104966 / NBRC 100827 / IM2).